A 416-amino-acid chain; its full sequence is Squalene synthase (416 aa).

A run of 2 helical transmembrane segments spans residues 285-304 and 386-406; these read VINFCAIPQVMAIGTLNACY and FISYDWMAVTSLAVSSAFLIA.

This sequence belongs to the phytoene/squalene synthase family. Mg(2+) is required as a cofactor.

It localises to the endoplasmic reticulum membrane. It carries out the reaction 2 (2E,6E)-farnesyl diphosphate + NADPH + H(+) = squalene + 2 diphosphate + NADP(+). It catalyses the reaction 2 (2E,6E)-farnesyl diphosphate + NADH + H(+) = squalene + 2 diphosphate + NAD(+). It participates in terpene metabolism; lanosterol biosynthesis; lanosterol from farnesyl diphosphate: step 1/3. The sequence is that of Squalene synthase (fdfT) from Dictyostelium discoideum (Social amoeba).